The primary structure comprises 222 residues: Phosphoribosylformylglycinamidine synthase subunit PurQ (222 aa).

Positions 3–222 constitute a Glutamine amidotransferase type-1 domain; that stretch reads AAVVVFPGSN…RALSGLLTDA (220 aa). Residue Cys-86 is the Nucleophile of the active site. Residues His-194 and Glu-196 contribute to the active site.

As to quaternary structure, part of the FGAM synthase complex composed of 1 PurL, 1 PurQ and 2 PurS subunits.

The protein localises to the cytoplasm. It carries out the reaction N(2)-formyl-N(1)-(5-phospho-beta-D-ribosyl)glycinamide + L-glutamine + ATP + H2O = 2-formamido-N(1)-(5-O-phospho-beta-D-ribosyl)acetamidine + L-glutamate + ADP + phosphate + H(+). The enzyme catalyses L-glutamine + H2O = L-glutamate + NH4(+). It functions in the pathway purine metabolism; IMP biosynthesis via de novo pathway; 5-amino-1-(5-phospho-D-ribosyl)imidazole from N(2)-formyl-N(1)-(5-phospho-D-ribosyl)glycinamide: step 1/2. Functionally, part of the phosphoribosylformylglycinamidine synthase complex involved in the purines biosynthetic pathway. Catalyzes the ATP-dependent conversion of formylglycinamide ribonucleotide (FGAR) and glutamine to yield formylglycinamidine ribonucleotide (FGAM) and glutamate. The FGAM synthase complex is composed of three subunits. PurQ produces an ammonia molecule by converting glutamine to glutamate. PurL transfers the ammonia molecule to FGAR to form FGAM in an ATP-dependent manner. PurS interacts with PurQ and PurL and is thought to assist in the transfer of the ammonia molecule from PurQ to PurL. The protein is Phosphoribosylformylglycinamidine synthase subunit PurQ of Ruegeria sp. (strain TM1040) (Silicibacter sp.).